Consider the following 427-residue polypeptide: 3-isopropylmalate dehydratase large subunit (427 aa).

[4Fe-4S] cluster is bound by residues Cys-308, Cys-368, and Cys-371.

The protein belongs to the aconitase/IPM isomerase family. LeuC type 2 subfamily. Heterodimer of LeuC and LeuD. [4Fe-4S] cluster is required as a cofactor.

The enzyme catalyses (2R,3S)-3-isopropylmalate = (2S)-2-isopropylmalate. Its pathway is amino-acid biosynthesis; L-leucine biosynthesis; L-leucine from 3-methyl-2-oxobutanoate: step 2/4. Its function is as follows. Catalyzes the isomerization between 2-isopropylmalate and 3-isopropylmalate, via the formation of 2-isopropylmaleate. The chain is 3-isopropylmalate dehydratase large subunit from Geobacter sulfurreducens (strain ATCC 51573 / DSM 12127 / PCA).